The chain runs to 252 residues: Hydroxyacylglutathione hydrolase (252 aa).

Zn(2+)-binding residues include H54, H56, D58, H59, H111, D128, and H166.

This sequence belongs to the metallo-beta-lactamase superfamily. Glyoxalase II family. In terms of assembly, monomer. Zn(2+) serves as cofactor.

It catalyses the reaction an S-(2-hydroxyacyl)glutathione + H2O = a 2-hydroxy carboxylate + glutathione + H(+). It functions in the pathway secondary metabolite metabolism; methylglyoxal degradation; (R)-lactate from methylglyoxal: step 2/2. In terms of biological role, thiolesterase that catalyzes the hydrolysis of S-D-lactoyl-glutathione to form glutathione and D-lactic acid. This chain is Hydroxyacylglutathione hydrolase, found in Vibrio vulnificus (strain CMCP6).